The primary structure comprises 206 residues: MLKTIRKHGITLALFAAGSTGLTAAINQMTKTTIAEQASLQQKALFDQVLPAERYNNALAQSCYLVTAPELGKGEHRVYIAKQDDKPVAAVLEATAPDGYSGAIQLLVGADFNGTVLGTRVTEHHETPGLGDKIELRLSDWITHFAGKKISGADDAHWAVKKDGGDFDQFTGATITPRAVVNAVKRAGLYAQTLPAQLSQLPACGE.

Residues 9–29 (GITLALFAAGSTGLTAAINQM) traverse the membrane as a helical segment. Thr174 bears the FMN phosphoryl threonine mark.

The protein belongs to the RnfG family. The complex is composed of six subunits: RsxA, RsxB, RsxC, RsxD, RsxE and RsxG. FMN serves as cofactor.

It localises to the cell inner membrane. In terms of biological role, part of a membrane-bound complex that couples electron transfer with translocation of ions across the membrane. Required to maintain the reduced state of SoxR. Probably transfers electron from NAD(P)H to SoxR. This is Ion-translocating oxidoreductase complex subunit G from Escherichia coli (strain K12).